The primary structure comprises 164 residues: Sec-independent protein translocase protein TatB (164 aa).

A helical transmembrane segment spans residues 1-21; the sequence is MIDIGLSKMALIGAVALIVIG. Residues 81-102 form a disordered region; it reads ASEFQKDWESGTSDAAATGHDG.

This sequence belongs to the TatB family. The Tat system comprises two distinct complexes: a TatABC complex, containing multiple copies of TatA, TatB and TatC subunits, and a separate TatA complex, containing only TatA subunits. Substrates initially bind to the TatABC complex, which probably triggers association of the separate TatA complex to form the active translocon.

The protein localises to the cell inner membrane. Functionally, part of the twin-arginine translocation (Tat) system that transports large folded proteins containing a characteristic twin-arginine motif in their signal peptide across membranes. Together with TatC, TatB is part of a receptor directly interacting with Tat signal peptides. TatB may form an oligomeric binding site that transiently accommodates folded Tat precursor proteins before their translocation. In Paracidovorax citrulli (strain AAC00-1) (Acidovorax citrulli), this protein is Sec-independent protein translocase protein TatB.